The primary structure comprises 103 residues: UPF0145 protein RSKD131_1772 (103 aa).

Belongs to the UPF0145 family.

The chain is UPF0145 protein RSKD131_1772 from Cereibacter sphaeroides (strain KD131 / KCTC 12085) (Rhodobacter sphaeroides).